A 162-amino-acid chain; its full sequence is ATP synthase subunit b (162 aa).

Residues 6 to 25 (TLFTLVTFLVLMLAVGKVAW) form a helical membrane-spanning segment.

It belongs to the ATPase B chain family. In terms of assembly, F-type ATPases have 2 components, F(1) - the catalytic core - and F(0) - the membrane proton channel. F(1) has five subunits: alpha(3), beta(3), gamma(1), delta(1), epsilon(1). F(0) has three main subunits: a(1), b(2) and c(10-14). The alpha and beta chains form an alternating ring which encloses part of the gamma chain. F(1) is attached to F(0) by a central stalk formed by the gamma and epsilon chains, while a peripheral stalk is formed by the delta and b chains.

It is found in the cell membrane. Functionally, f(1)F(0) ATP synthase produces ATP from ADP in the presence of a proton or sodium gradient. F-type ATPases consist of two structural domains, F(1) containing the extramembraneous catalytic core and F(0) containing the membrane proton channel, linked together by a central stalk and a peripheral stalk. During catalysis, ATP synthesis in the catalytic domain of F(1) is coupled via a rotary mechanism of the central stalk subunits to proton translocation. In terms of biological role, component of the F(0) channel, it forms part of the peripheral stalk, linking F(1) to F(0). This Lacticaseibacillus paracasei (strain ATCC 334 / BCRC 17002 / CCUG 31169 / CIP 107868 / KCTC 3260 / NRRL B-441) (Lactobacillus paracasei) protein is ATP synthase subunit b.